Consider the following 453-residue polypeptide: MGSKFHAFMFPWFGFGHMTAFLHLANKLAEKDHKITFLLPKKARKQLESLNLFPDCIVFQTLTIPSVDGLPDGAETTSDIPISLGSFLASAMDRTRIQVKEAVSVGKPDLIFFDFAHWIPEIAREYGVKSVNFITISAACVAISFVPGRSQDDLGSTPPGYPSSKVLLRGHETNSLSFLSYPFGDGTSFYERIMIGLKNCDVISIRTCQEMEGKFCDFIENQFQRKVLLTGPMLPEPDNSKPLEDQWRQWLSKFDPGSVIYCALGSQIILEKDQFQELCLGMELTGLPFLVAVKPPKGSSTIQEALPKGFEERVKARGVVWGGWVQQPLILAHPSIGCFVSHCGFGSMWEALVNDCQIVFIPHLGEQILNTRLMSEELKVSVEVKREETGWFSKESLSGAVRSVMDRDSELGNWARRNHVKWKESLLRHGLMSGYLNKFVEALEKLVQNINLE.

UDP-alpha-D-glucose-binding positions include Ser266, Val325 to Gln327, His342 to Glu350, and Leu364 to Gln367.

The protein belongs to the UDP-glycosyltransferase family.

The protein is UDP-glycosyltransferase 79B6 (UGT79B6) of Arabidopsis thaliana (Mouse-ear cress).